A 272-amino-acid chain; its full sequence is Glutamate racemase (272 aa).

Substrate-binding positions include 16–17 (DS) and 48–49 (YG). C79 (proton donor/acceptor) is an active-site residue. 80-81 (NT) is a substrate binding site. Catalysis depends on C191, which acts as the Proton donor/acceptor. Residue 192–193 (TH) participates in substrate binding.

This sequence belongs to the aspartate/glutamate racemases family.

The catalysed reaction is L-glutamate = D-glutamate. Its pathway is cell wall biogenesis; peptidoglycan biosynthesis. In terms of biological role, provides the (R)-glutamate required for cell wall biosynthesis. The sequence is that of Glutamate racemase from Chlorobium phaeobacteroides (strain DSM 266 / SMG 266 / 2430).